Consider the following 437-residue polypeptide: Protein translocase subunit SecY (437 aa).

Transmembrane regions (helical) follow at residues 19 to 39, 69 to 89, 122 to 142, 157 to 177, 189 to 209, 219 to 239, 276 to 296, 316 to 336, 378 to 398, and 400 to 420; these read LFTLAIIVVYRVGTHIPIPGV, LLQITIFALGIMPYITASIIL, VALAILQGTGLVATARSAPLF, IFTTITMVICMTAGTCVVMWL, GMSILMFISIAATFPSALWAI, WIEFGTVIAVGLIMVALVVFV, VIPVIFASSLLYIPALVAQFA, PIYIVTYFLLIVFFAFFYVAI, GSLYLGLIALVPTMALVGFGA, and QNFPFGGTSILIIVGVGLETV.

The protein belongs to the SecY/SEC61-alpha family. In terms of assembly, component of the Sec protein translocase complex. Heterotrimer consisting of SecY, SecE and SecG subunits. The heterotrimers can form oligomers, although 1 heterotrimer is thought to be able to translocate proteins. Interacts with the ribosome. Interacts with SecDF, and other proteins may be involved. Interacts with SecA.

The protein localises to the cell membrane. Functionally, the central subunit of the protein translocation channel SecYEG. Consists of two halves formed by TMs 1-5 and 6-10. These two domains form a lateral gate at the front which open onto the bilayer between TMs 2 and 7, and are clamped together by SecE at the back. The channel is closed by both a pore ring composed of hydrophobic SecY resides and a short helix (helix 2A) on the extracellular side of the membrane which forms a plug. The plug probably moves laterally to allow the channel to open. The ring and the pore may move independently. The polypeptide is Protein translocase subunit SecY (Streptomyces galbus).